We begin with the raw amino-acid sequence, 206 residues long: Undecaprenyl-diphosphatase (206 aa).

Helical transmembrane passes span 5 to 25, 53 to 73, 79 to 99, 138 to 158, and 164 to 184; these read YYWI…LIGG, FLSK…LLIF, IGIT…VSKY, VTLL…EAVL, and VYVG…GSWI.

Its subcellular location is the cell membrane. It carries out the reaction di-trans,octa-cis-undecaprenyl diphosphate + H2O = di-trans,octa-cis-undecaprenyl phosphate + phosphate + H(+). The protein is Undecaprenyl-diphosphatase (sepP) of Sulfolobus acidocaldarius (strain ATCC 33909 / DSM 639 / JCM 8929 / NBRC 15157 / NCIMB 11770).